Consider the following 151-residue polypeptide: Nucleoside diphosphate kinase (151 aa).

Residues Lys-11, Phe-59, Arg-87, Thr-93, Arg-104, and Asn-114 each coordinate ATP. His-117 functions as the Pros-phosphohistidine intermediate in the catalytic mechanism.

This sequence belongs to the NDK family. In terms of assembly, homotetramer. Requires Mg(2+) as cofactor.

The protein localises to the cytoplasm. The enzyme catalyses a 2'-deoxyribonucleoside 5'-diphosphate + ATP = a 2'-deoxyribonucleoside 5'-triphosphate + ADP. It catalyses the reaction a ribonucleoside 5'-diphosphate + ATP = a ribonucleoside 5'-triphosphate + ADP. Major role in the synthesis of nucleoside triphosphates other than ATP. The ATP gamma phosphate is transferred to the NDP beta phosphate via a ping-pong mechanism, using a phosphorylated active-site intermediate. This is Nucleoside diphosphate kinase from Prochlorococcus marinus (strain SARG / CCMP1375 / SS120).